Reading from the N-terminus, the 190-residue chain is MQESFENSVKNMLTIIGEDPNREGLIKTPERVYKAFKFLTSGYEQDPKEVLGDALFTSSNNEMVLMRNIEFYSLCEHHLLPIIGRVHVAYIPNGKVVGLSKIPRMVNIYARRLQIQEQMTEQIAKALEDVIAPKGVGVVVEARHMCVEMRGVEKINSTTTTSALRGCFIKNADTRREFFSLINSPRETHF.

Residues cysteine 75, histidine 78, and cysteine 146 each contribute to the Zn(2+) site.

It belongs to the GTP cyclohydrolase I family. Homomer.

It carries out the reaction GTP + H2O = 7,8-dihydroneopterin 3'-triphosphate + formate + H(+). It participates in cofactor biosynthesis; 7,8-dihydroneopterin triphosphate biosynthesis; 7,8-dihydroneopterin triphosphate from GTP: step 1/1. In Campylobacter concisus (strain 13826), this protein is GTP cyclohydrolase 1.